The chain runs to 124 residues: Membrane magnesium transporter 2 (124 aa).

Position 1 (M1) is a topological domain, cytoplasmic. A helical transmembrane segment spans residues 2 to 22 (VAWLWKVLVGVGLSALAHAAF). The Lumenal segment spans residues 23-44 (SAAQHRSHTRLAEMKYEPLPTD). Residues 45 to 65 (IVLQTLLAFALTCYGVVHTAG) traverse the membrane as a helical segment. The Cytoplasmic portion of the chain corresponds to 66–124 (DFRDRDATSELKNVTFDTLRNRPSFYVFQHSGSSLLQPSDTTRSSNLNVPSSDDIRLKF).

The protein belongs to the membrane magnesium transporter (TC 1.A.67) family.

The protein resides in the golgi apparatus membrane. It is found in the early endosome membrane. Mediates Mg(2+) transport. The sequence is that of Membrane magnesium transporter 2 from Rattus norvegicus (Rat).